Reading from the N-terminus, the 169-residue chain is Der GTPase-activating protein YihI (169 aa).

2 disordered regions span residues 1 to 98 (MKPS…PQAE) and 144 to 169 (GLSY…LRGN). A compositionally biased stretch (basic residues) spans 10 to 19 (SKGHAKARRK). The span at 20–30 (TREELDQEARD) shows a compositional bias: basic and acidic residues. Residues 31–40 (RKRQKKRRGH) are compositionally biased toward basic residues. Residues 49 to 58 (GNTTSGSKGQ) are compositionally biased toward polar residues. Acidic residues predominate over residues 147 to 159 (YDDDEEEEEDEKQ). Basic and acidic residues predominate over residues 160–169 (EDMMRLLRGN).

The protein belongs to the YihI family. In terms of assembly, interacts with Der.

Functionally, a GTPase-activating protein (GAP) that modifies Der/EngA GTPase function. May play a role in ribosome biogenesis. This is Der GTPase-activating protein YihI from Escherichia coli O139:H28 (strain E24377A / ETEC).